We begin with the raw amino-acid sequence, 1771 residues long: Kinase D-interacting substrate of 220 kDa (1771 aa).

Topologically, residues 1–499 are cytoplasmic; the sequence is MSVLISQSVI…QIEPLFQFSW (499 aa). 12 ANK repeats span residues 4-33, 37-66, 70-99, 103-132, 136-165, 169-198, 202-231, 235-264, 268-297, 301-330, 334-363, and 367-396; these read LISQ…DVDE, CGQT…NCNL, DNWT…NLEH, GGWT…NPSV, YSVY…KVNC, YGTT…DVDQ, NSMT…NVNL, DGNT…YVNI, SGDT…DIDI, DNKT…DTEI, DGET…KVSA, and KGDT…DGRL. In terms of domain architecture, KAP NTPase spans 440–953; that stretch reads YDLYSSALAD…NIVSVTGRLL (514 aa). The helical transmembrane segment at 500 to 520 threads the bilayer; it reads LIVFLTLLLCGGLGLLFAFTV. Residues 521 to 524 are Extracellular-facing; it reads HPNL. The helical transmembrane segment at 525–545 threads the bilayer; sequence GIAVSLSFLALLYIFFIVIYF. Over 546–659 the chain is Cytoplasmic; sequence GGRREGESWN…KWKKTCCLPS (114 aa). The chain crosses the membrane as a helical span at residues 660–680; sequence FVIFLFIIGCIISGITLLAIF. The Extracellular segment spans residues 681–685; that stretch reads RVDPK. The chain crosses the membrane as a helical span at residues 686 to 706; the sequence is HLTVNAVLISIASVVGLAFVL. Over 707 to 1771 the chain is Cytoplasmic; that stretch reads NCRTWWQVLD…GFGEERESIL (1065 aa). A phosphoserine mark is found at serine 882 and serine 885. A Phosphothreonine modification is found at threonine 914. Serine 918 carries the post-translational modification Phosphoserine. The interval 1089-1092 is mediates interaction with CRKL; it reads PRAP. At serine 1163 the chain carries Phosphoserine. Disordered regions lie at residues 1182–1202, 1285–1310, 1344–1368, and 1397–1564; these read DAAE…PAPG, PEDP…RASH, RHSN…SQDS, and LEGG…EPIR. Phosphoserine is present on residues serine 1296, serine 1352, serine 1359, serine 1361, serine 1362, and serine 1365. Residues 1346–1358 are compositionally biased toward polar residues; sequence SNLSWQSQTRRTP. The segment covering 1359 to 1368 has biased composition (low complexity); it reads SLSSLNSQDS. Positions 1403 to 1430 are enriched in polar residues; that stretch reads STTISGRSSPHSTYYMGQSSSGGSIHSN. Basic and acidic residues predominate over residues 1431–1457; the sequence is LEQEKGKDSEPKPDDGRKSFLMKRGDV. A compositionally biased stretch (polar residues) spans 1460-1470; the sequence is YSSSGVSTNDA. 4 positions are modified to phosphoserine: serine 1521, serine 1526, serine 1555, and serine 1574. Positions 1522 to 1532 are enriched in acidic residues; that stretch reads DEDESGTEESD. Basic and acidic residues predominate over residues 1537-1561; that stretch reads LKDDKDRKAEGKVERVPKSPEHSAE. The tract at residues 1578 to 1633 is disordered; that stretch reads LDKKDSSDSGVRSSESSPNHSLHNEVADDSQLEKANLIELEDDSHSGKRGIPHSLS. Over residues 1585–1594 the composition is skewed to low complexity; sequence DSGVRSSESS. Phosphoserine occurs at positions 1623 and 1633. Threonine 1679 bears the Phosphothreonine mark. A Phosphoserine modification is found at serine 1681. Threonine 1684 is modified (phosphothreonine). Residues 1713 to 1731 are compositionally biased toward polar residues; the sequence is LRPSSSPNPTTIQNENLKS. Residues 1713-1771 are disordered; that stretch reads LRPSSSPNPTTIQNENLKSMTHKRSQRSSYTRLSKDPPELHAAASSESTGFGEERESIL. The PDZ-binding signature appears at 1766–1771; the sequence is ERESIL.

As to quaternary structure, found in a complex, at least composed of KIDINS220, MAGI2, NTRK1 and RAPGEF2; the complex is mainly formed at late endosomes in a nerve growth factor (NGF)-dependent manner. Interacts with RAPGEF2; the interaction is strengthened after NGF stimulation. Isoform 2 interacts (via C-terminal domain) with MAGI2 isoform 1 (via PDZ domain). Interacts with NTRK1, NTRK2, NTRK3, ERKL and NGFR. Can form a ternary complex with NGFR and NTRK1 and this complex is affected by the expression levels of KIDINS220/ARMS. An increase in KIDINS220/ARMS expression leads to a decreased association of NGFR and NTRK1. Interacts (via PDZ-binding motif) with SNTA1 and SNTB2 (via PDZ domains). Interacts with EPHA4 and PRKD1. Tyrosine phosphorylated by NTRK1, NTRK2, EPHB2 and EPHA4. Phosphorylation at Ser-918 is induced by phorbol ester treatment. Phosphorylation by NTRK2 is induced by brain-derived neurotrophic factor (BDNF) and neurotrophin-4/5. Phosphorylation by NTRK1 is induced by nerve growth factor (NGF). Abundant in developing and adult neural tissues as well as neuroendocrine cells and dendritic cells. Overexpressed in melanoma and melanoma cell lines.

Its subcellular location is the membrane. The protein localises to the late endosome. Promotes a prolonged MAP-kinase signaling by neurotrophins through activation of a Rap1-dependent mechanism. Provides a docking site for the CRKL-C3G complex, resulting in Rap1-dependent sustained ERK activation. May play an important role in regulating postsynaptic signal transduction through the syntrophin-mediated localization of receptor tyrosine kinases such as EPHA4. In cooperation with SNTA1 can enhance EPHA4-induced JAK/STAT activation. Plays a role in nerve growth factor (NGF)-induced recruitment of RAPGEF2 to late endosomes and neurite outgrowth. May play a role in neurotrophin- and ephrin-mediated neuronal outgrowth and in axon guidance during neural development and in neuronal regeneration. Modulates stress-induced apoptosis of melanoma cells via regulation of the MEK/ERK signaling pathway. This chain is Kinase D-interacting substrate of 220 kDa (KIDINS220), found in Homo sapiens (Human).